The chain runs to 151 residues: Cytochrome c-type biogenesis protein CcmE (151 aa).

Residues 1 to 8 (MNPQRKKR) lie on the Cytoplasmic side of the membrane. Residues 9–29 (LFLILGLLAGVAVAVGFALSA) form a helical; Signal-anchor for type II membrane protein membrane-spanning segment. The Periplasmic segment spans residues 30-151 (LQQNINLFYT…QAASGAEAKP (122 aa)). Heme-binding residues include histidine 124 and tyrosine 128.

Belongs to the CcmE/CycJ family.

The protein localises to the cell inner membrane. Functionally, heme chaperone required for the biogenesis of c-type cytochromes. Transiently binds heme delivered by CcmC and transfers the heme to apo-cytochromes in a process facilitated by CcmF and CcmH. This chain is Cytochrome c-type biogenesis protein CcmE, found in Pseudomonas putida (strain W619).